An 81-amino-acid chain; its full sequence is Small ribosomal subunit protein bS16 (81 aa).

It belongs to the bacterial ribosomal protein bS16 family.

The chain is Small ribosomal subunit protein bS16 from Caldicellulosiruptor bescii (strain ATCC BAA-1888 / DSM 6725 / KCTC 15123 / Z-1320) (Anaerocellum thermophilum).